The sequence spans 293 residues: MSEKESPSPQHKKDEVVDDTEQETKDSEDDATKKMKIKEGSKFTMNSILSPLESLARVQQQLLKMAAAQSGFGGNGSGGNGANGFPYPARFATNCFSGPFPGYNGSQNWYNGNDARFAAAAALLPCAIDPVRSAINHQFSMSQRRKRRVLFSQAQVYELERRFKQAKYLTAPEREQLANSIRLTPTQVKIWFQNHRYKCKRQEKEKAMSGLGHGDDGCSPPPGDDDDDDDKYSIEMDDKDDEEEDGAKPMLKSNGVFGLPYPSPANAAAAAAAAAFNFQFGAQGPNPAYFMRW.

Basic and acidic residues-rich tracts occupy residues 1 to 15 and 22 to 38; these read MSEK…KKDE and QETK…MKIK. Disordered stretches follow at residues 1 to 38 and 203 to 256; these read MSEK…MKIK and EKEK…SNGV. Positions 144–203 form a DNA-binding region, homeobox; it reads RRKRRVLFSQAQVYELERRFKQAKYLTAPEREQLANSIRLTPTQVKIWFQNHRYKCKRQE.

Belongs to the NK-2 homeobox family. As to expression, expressed in the 8 vulval muscles, 8-10 ventral neurons in the head and in the most posterior pharyngeal muscle cell, m8.

Its subcellular location is the nucleus. In terms of biological role, probable transcriptional regulator that is required in neural development for the normal formation of sublateral cholinergic motor neuron processes. Plays a role in regulating the expression of acetylcholine transporter protein unc-17 in the sublateral processes. In particular, it is required in sublateral motor neurons for a left-right turning behavior that occurs during the lethargus phase of the normal sleep process called 'flipping'. During 'flipping' animals rotate 180 degrees about their longitudinal axis. The polypeptide is Homeobox protein ceh-24 (Caenorhabditis briggsae).